A 363-amino-acid polypeptide reads, in one-letter code: Cyanuric acid amidohydrolase (363 aa).

Positions 1-104 (MYHIDVFRIP…TVFARRPAID (104 aa)) are RU A. Substrate contacts are provided by residues R52 and 83–84 (SG). Positions 112–249 (RLTLGIAFTR…NVVIAIGMSE (138 aa)) are RU B. K162 is an active-site residue. Residues R194 and 232–233 (SA) each bind substrate. Residue S232 is the Nucleophile of the active site. The interval 255–363 (LVIAHGVMSD…GGPFAVIARA (109 aa)) is RU C. E297 lines the Mg(2+) pocket. Substrate-binding positions include R324 and 343–344 (SG). Mg(2+) is bound by residues A346, Q349, G350, P351, and G354.

The protein belongs to the cyclic amide hydrolase (CyAH) family. In terms of assembly, homotetramer.

It catalyses the reaction cyanurate + H2O = 1-carboxybiuret + H(+). The protein operates within xenobiotic degradation; atrazine degradation; biuret from cyanurate: step 1/1. Inhibited by barbituric acid. In terms of biological role, responsible for the hydrolysis of cyanuric acid, an intermediate formed during catabolism of s-triazine based compounds in herbicides such as atrazine and polymers such as melamine. Catalyzes the hydrolytic opening of the s-triazine ring of cyanuric acid (2,4,6-trihydroxy-s-triazine) to yield carbon dioxide and carboxybiuret, which spontaneously decarboxylates to biuret. This is Cyanuric acid amidohydrolase (atzD) from Pseudomonas sp. (strain ADP).